The chain runs to 84 residues: Small ribosomal subunit protein eS27 (84 aa).

The C4-type zinc-finger motif lies at 38–60 (CPKCGATTTTFSHAHRQILCQKC).

It belongs to the eukaryotic ribosomal protein eS27 family. In terms of assembly, component of the small ribosomal subunit. Zn(2+) is required as a cofactor.

The protein localises to the cytoplasm. Component of the small ribosomal subunit. The ribosome is a large ribonucleoprotein complex responsible for the synthesis of proteins in the cell. Required for proper rRNA processing and maturation of 18S rRNAs. The polypeptide is Small ribosomal subunit protein eS27 (RPS27) (Entamoeba histolytica (strain ATCC 30459 / HM-1:IMSS / ABRM)).